Reading from the N-terminus, the 1159-residue chain is ATP-dependent helicase/deoxyribonuclease subunit B (1159 aa).

The UvrD-like helicase ATP-binding domain maps to 1–401 (MSIRFVYGRS…LLKNWSYESV (401 aa)). 8–15 (GRSGTGKS) lines the ATP pocket. One can recognise a UvrD-like helicase C-terminal domain in the interval 279 to 582 (PYRFKGNLEL…NIGDIARIKG (304 aa)). [4Fe-4S] cluster-binding residues include Cys787, Cys1106, Cys1109, and Cys1115.

This sequence belongs to the helicase family. AddB/RexB type 1 subfamily. As to quaternary structure, heterodimer of AddA and AddB. Mg(2+) serves as cofactor. [4Fe-4S] cluster is required as a cofactor.

In terms of biological role, the heterodimer acts as both an ATP-dependent DNA helicase and an ATP-dependent, dual-direction single-stranded exonuclease. Recognizes the chi site generating a DNA molecule suitable for the initiation of homologous recombination. The AddB subunit has 5' -&gt; 3' nuclease activity but not helicase activity. The protein is ATP-dependent helicase/deoxyribonuclease subunit B of Clostridium beijerinckii (strain ATCC 51743 / NCIMB 8052) (Clostridium acetobutylicum).